Consider the following 100-residue polypeptide: Urease subunit gamma (100 aa).

The protein belongs to the urease gamma subunit family. In terms of assembly, heterotrimer of UreA (gamma), UreB (beta) and UreC (alpha) subunits. Three heterotrimers associate to form the active enzyme.

The protein localises to the cytoplasm. The enzyme catalyses urea + 2 H2O + H(+) = hydrogencarbonate + 2 NH4(+). The protein operates within nitrogen metabolism; urea degradation; CO(2) and NH(3) from urea (urease route): step 1/1. In Herpetosiphon aurantiacus (strain ATCC 23779 / DSM 785 / 114-95), this protein is Urease subunit gamma.